Here is a 118-residue protein sequence, read N- to C-terminus: Cell division protein FtsB (118 aa).

Over 1-3 (MRL) the chain is Cytoplasmic. Residues 4–21 (LFLVLLVLLGLIQYPLWL) traverse the membrane as a helical segment. At 22-118 (GKGGWFKVWD…PRPPATPPRR (97 aa)) the chain is on the periplasmic side. The stretch at 28 to 62 (KVWDLQRQVAEQRETNDGLRARNTALEAEVRDLAT) forms a coiled coil. The disordered stretch occupies residues 88–118 (LPPGTPLPSDNSTPQASALSKPRPPATPPRR). Residues 95-105 (PSDNSTPQASA) are compositionally biased toward polar residues. Residues 109–118 (PRPPATPPRR) show a composition bias toward pro residues.

Belongs to the FtsB family. In terms of assembly, part of a complex composed of FtsB, FtsL and FtsQ.

Its subcellular location is the cell inner membrane. In terms of biological role, essential cell division protein. May link together the upstream cell division proteins, which are predominantly cytoplasmic, with the downstream cell division proteins, which are predominantly periplasmic. The polypeptide is Cell division protein FtsB (Bordetella bronchiseptica (strain ATCC BAA-588 / NCTC 13252 / RB50) (Alcaligenes bronchisepticus)).